We begin with the raw amino-acid sequence, 1044 residues long: Diacylglycerol lipase-alpha (1044 aa).

Residues 1–22 are Cytoplasmic-facing; sequence MPGIVVFRRRWSVGSDDLVLPA. The chain crosses the membrane as a helical span at residues 23–43; it reads IFLFLLHTTWFVILSVVLFGL. At 44–60 the chain is on the extracellular side; that stretch reads VYNPHEACSLNLVDHGR. The helical transmembrane segment at 61–81 threads the bilayer; sequence GYLGILLSCMIAEMAIIWLSM. Over 82-101 the chain is Cytoplasmic; that stretch reads RGGILYTEPRDSMQYVLYVR. A helical transmembrane segment spans residues 102–122; it reads LAILVIEFIYAIVGIVWLTQY. Residues 123–136 are Extracellular-facing; sequence YTSCNDLTAKNVTL. Asn-133 is a glycosylation site (N-linked (GlcNAc...) asparagine). The chain crosses the membrane as a helical span at residues 137 to 157; sequence GMVVCNWVVILSVCITVLCVF. Topologically, residues 158–1044 are cytoplasmic; it reads DPTGRTFVKL…KQDDLVISAR (887 aa). Residues Ser-472 and Asp-524 each act as charge relay system in the active site. 11 positions are modified to phosphoserine: Ser-728, Ser-730, Ser-733, Ser-744, Ser-784, Ser-786, Ser-808, Ser-810, Ser-835, Ser-849, and Ser-954. The interval 848 to 905 is disordered; sequence LSKHSQDTQPLEAALGSGGVTPERPPSAANDEEEAAGGSEGGGVAPRGELALHNGRLG. Residues 1013–1044 form a disordered region; it reads QECLATDKIRTSTPTGHGASPTKQDDLVISAR. Position 1025 is a phosphothreonine (Thr-1025).

It belongs to the AB hydrolase superfamily. Lipase family. In terms of assembly, interacts (via C-terminal) with CAMK2A; leading to the phosphorylation and inhibition of DAGLA enzymatic activity. Interacts (via PPXXF motif) with HOMER1 and HOMER2; this interaction is required for DAGLA membrane localization. Ca(2+) is required as a cofactor. In terms of processing, phosphorylated at Ser-784 and Ser-810 by CAMK2A; phosphorylation by CAMK2A inhibits diacylglycerol lipase activity.

It is found in the cell membrane. The protein resides in the cell projection. It localises to the dendritic spine membrane. The protein localises to the postsynaptic density membrane. Its subcellular location is the early endosome membrane. It catalyses the reaction a 1,2-diacyl-sn-glycerol + H2O = a 2-acylglycerol + a fatty acid + H(+). The enzyme catalyses 1-octadecanoyl-2-(5Z,8Z,11Z,14Z-eicosatetraenoyl)-sn-glycerol + H2O = 2-(5Z,8Z,11Z,14Z-eicosatetraenoyl)-glycerol + octadecanoate + H(+). It carries out the reaction 1,2-di-(9Z-octadecenoyl)-sn-glycerol + H2O = 2-(9Z-octadecenoyl)-glycerol + (9Z)-octadecenoate + H(+). The catalysed reaction is 1-(9Z-octadecenoyl)-2-(5Z,8Z,11Z,14Z-eicosatetraenoyl)-sn-glycerol + H2O = 2-(5Z,8Z,11Z,14Z-eicosatetraenoyl)-glycerol + (9Z)-octadecenoate + H(+). It catalyses the reaction 1-(9Z-octadecenoyl)-2-octadecanoyl-sn-glycerol + H2O = 2-octadecanoylglycerol + (9Z)-octadecenoate + H(+). The enzyme catalyses 1-(9Z-octadecenoyl)-2-(9Z,12Z-octadecadienoyl)-sn-glycerol + H2O = 2-(9Z,12Z-octadecadienoyl)-glycerol + (9Z)-octadecenoate + H(+). It carries out the reaction 1-(9Z-octadecenoyl)-2-O-(5Z,8Z,11Z,14Z-eicosatetraenyl)-sn-glycerol + H2O = 2-O-(5Z,8Z,11Z,14Z)-eicosatetraenylglycerol + (9Z)-octadecenoate + H(+). With respect to regulation, inhibited by 1,2,3-triazole urea covalent inhibitors KT172, DH376 and DO34. Inhibited by p-hydroxy-mercuri-benzoate and HgCl(2), but not to PMSF. Also inhibited by RHC80267. Diacylglycerol lipase activity is inhibited by the phosphorylation of Ser-784 and Ser-810 by CAMK2A. Functionally, serine hydrolase that hydrolyzes arachidonic acid-esterified diacylglycerols (DAGs) to produce the principal endocannabinoid, 2-arachidonoylglycerol (2-AG). Preferentially hydrolyzes sn-1 fatty acids from diacylglycerols (DAG) that contain arachidonic acid (AA) esterified at the sn-2 position to biosynthesize 2-AG. Has negligible activity against other lipids including monoacylglycerols and phospholipids. Plays a key role in regulating 2-AG signaling in the CNS. Controls the activity of 2-AG as a retrograde messenger at neuronal synapses. Supports axonal growth during development and adult neurogenesis. Plays a role for eCB signaling in the physiological regulation of anxiety and depressive behaviors. Also regulates neuroinflammatory responses in the brain, in particular, LPS-induced microglial activation. The polypeptide is Diacylglycerol lipase-alpha (Dagla) (Rattus norvegicus (Rat)).